The sequence spans 257 residues: uncharacterized protein (257 aa).

Residues 6-26 (IFWLNLAAIIIISIVVSGGMF) form a helical membrane-spanning segment.

This sequence belongs to the staphylococcal tandem lipoprotein family.

It localises to the cell membrane. This is an uncharacterized protein from Staphylococcus aureus (strain Mu50 / ATCC 700699).